A 226-amino-acid chain; its full sequence is MNHTVIQKLQKILGYTFIKKDLLIQALTHRSANSKHNERLEFLGDSILSFVIANALYHCFPHVNEGDMSRMRATLVRGHTLAKIAYEFDLGDYLQLGQGELKSGGFRRESILANTVEALIGSIFLDSNLKTIEKLILKWYKNRLKAINPSDTQKDPKTRLQEYLQSKHLPLPSYLVEQVYGEAHNQLFTIYCEISGINEKTIGIGSSRRKAEQEAAQNALIKLGIE.

Residues 6 to 128 enclose the RNase III domain; the sequence is IQKLQKILGY…LIGSIFLDSN (123 aa). Glutamate 41 lines the Mg(2+) pocket. Residue aspartate 45 is part of the active site. Mg(2+)-binding residues include asparagine 114 and glutamate 117. The active site involves glutamate 117. The DRBM domain maps to 155–225; it reads DPKTRLQEYL…AQNALIKLGI (71 aa).

The protein belongs to the ribonuclease III family. As to quaternary structure, homodimer. Mg(2+) is required as a cofactor.

Its subcellular location is the cytoplasm. The enzyme catalyses Endonucleolytic cleavage to 5'-phosphomonoester.. Its function is as follows. Digests double-stranded RNA. Involved in the processing of primary rRNA transcript to yield the immediate precursors to the large and small rRNAs (23S and 16S). Processes some mRNAs, and tRNAs when they are encoded in the rRNA operon. Processes pre-crRNA and tracrRNA of type II CRISPR loci if present in the organism. The protein is Ribonuclease 3 of Buchnera aphidicola subsp. Baizongia pistaciae (strain Bp).